A 330-amino-acid chain; its full sequence is Diacylglycerol acyltransferase/mycolyltransferase Ag85B (330 aa).

The signal sequence occupies residues 1-40 (MTDLSEKVRAWGRRLLVGAAAAVTLPGLIGLAGGAATANA). 82–83 (LR) contacts substrate. Residues 98–108 (FEWYYQSGLSV) form a fibronectin-binding region. The cysteines at positions 127 and 132 are disulfide-linked. Positions 166 and 194 each coordinate substrate. Residue Ser166 is the Nucleophile of the active site. Residue Glu270 is part of the active site. Residues 272 to 275 (FVRS), Lys279, and 302 to 304 (HSW) contribute to the substrate site. His302 is an active-site residue.

It belongs to the mycobacterial A85 antigen family.

Its subcellular location is the secreted. It carries out the reaction 2 alpha,alpha'-trehalose 6-mycolate = alpha,alpha'-trehalose 6,6'-bismycolate + alpha,alpha-trehalose. It catalyses the reaction an acyl-CoA + a 1,2-diacyl-sn-glycerol = a triacyl-sn-glycerol + CoA. In terms of biological role, the antigen 85 proteins (FbpA, FbpB, FbpC) are responsible for the high affinity of mycobacteria for fibronectin, a large adhesive glycoprotein, which facilitates the attachment of M.tuberculosis to murine alveolar macrophages (AMs). They also help to maintain the integrity of the cell wall by catalyzing the transfer of mycolic acids to cell wall arabinogalactan and through the synthesis of alpha,alpha-trehalose dimycolate (TDM, cord factor). They catalyze the transfer of a mycoloyl residue from one molecule of alpha,alpha-trehalose monomycolate (TMM) to another TMM, leading to the formation of TDM. The protein is Diacylglycerol acyltransferase/mycolyltransferase Ag85B (fbpB) of Mycobacterium avium.